The primary structure comprises 248 residues: Small ribosomal subunit protein uS2c (248 aa).

It belongs to the universal ribosomal protein uS2 family.

The protein resides in the plastid. It is found in the chloroplast. The protein is Small ribosomal subunit protein uS2c (rps2) of Trachelium caeruleum (Blue throatwort).